We begin with the raw amino-acid sequence, 331 residues long: Decarboxylase orsB (331 aa).

Positions 11, 157, and 284 each coordinate Zn(2+).

Belongs to the metallo-dependent hydrolases superfamily. ACMSD family.

It functions in the pathway secondary metabolite biosynthesis. Functionally, decarboxylase; part of the gene cluster that mediates the biosynthesis of orsellinic acid, as well as of the cathepsin K inhibitors F9775 A and F9775 B. The non-reducing polyketide synthase orsA produces orsellinic acid by condensing acetyl-CoA with 3 malonyl-CoA units. Further modifications by the decarboxylase orsB and the tyrosinase-like protein orsC lead to the production of F9775 A and F9775 B. The functions of orsD and orsE remain unclear since only orsB and orsC are required to convert orsellinic acid into F9775 A and F9775 B. In Emericella nidulans (strain FGSC A4 / ATCC 38163 / CBS 112.46 / NRRL 194 / M139) (Aspergillus nidulans), this protein is Decarboxylase orsB.